The primary structure comprises 221 residues: Tetraspanin-2 (221 aa).

Residues 1–13 (MGRFRGGLRCIKY) are Cytoplasmic-facing. The helical transmembrane segment at 14-34 (LLLGFNLLFWLAGSAVIAFGL) threads the bilayer. Residues 35–54 (WFRFGGAIKELSSEDKSPEY) are Extracellular-facing. The chain crosses the membrane as a helical span at residues 55–75 (FYVGLYVLVGAGALMMAVGFF). The Cytoplasmic segment spans residues 76–90 (GCCGAMRESQCVLGS). The helical transmembrane segment at 91 to 111 (FFTCLLVIFAAEVTTGVFAFI) threads the bilayer. Residues 112–188 (GKGVAIRHVQ…ETIISVKLQL (77 aa)) lie on the Extracellular side of the membrane. Asparagine 139 carries an N-linked (GlcNAc...) asparagine glycan. The chain crosses the membrane as a helical span at residues 189–209 (IGIVGIGIAGLTIFGMIFSMV). Over 210-221 (LCCAIRNSRDVI) the chain is Cytoplasmic.

It belongs to the tetraspanin (TM4SF) family.

The protein resides in the membrane. Functionally, may play a role in signalling in oligodendrocytes in the early stages of their terminal differentiation into myelin-forming glia and may also function in stabilizing the mature sheath. The protein is Tetraspanin-2 (TSPAN2) of Homo sapiens (Human).